The chain runs to 266 residues: Putative carbamate hydrolase RutD (266 aa).

The protein belongs to the AB hydrolase superfamily. Hydrolase RutD family.

It catalyses the reaction carbamate + 2 H(+) = NH4(+) + CO2. Functionally, involved in pyrimidine catabolism. May facilitate the hydrolysis of carbamate, a reaction that can also occur spontaneously. The chain is Putative carbamate hydrolase RutD from Escherichia coli O127:H6 (strain E2348/69 / EPEC).